We begin with the raw amino-acid sequence, 209 residues long: Protein Sxy (209 aa).

It belongs to the Sxy/TfoX family.

Functionally, induces low levels of natural DNA uptake by inducing transcription of the competence genes (the CRP-S regulon) required for DNA transformation. Induction of the CRP-S regulon also requires Sxy-activated promoter (CRP-S), cAMP receptor protein (CRP) and cAMP. Induces CRP-S site-containing genes which are involved in genome maintenance and transcription or encoding transposases and toxin-antitoxin pairs. This is Protein Sxy from Escherichia coli (strain K12).